Consider the following 286-residue polypeptide: uncharacterized protein (286 aa).

The segment at 152 to 182 (YPSTTTSVTPGKKGEKTTKVDGFSSPLNQDT) is disordered. A helical transmembrane segment spans residues 198–218 (VLIAVTLFVSGIAITVFVIFE). The segment at 239–278 (RRPRKEDQQPGTAESQSDTQPKKVGQEAPNSSSPKKAVEI) is disordered. Over residues 247 to 257 (QPGTAESQSDT) the composition is skewed to polar residues.

It is found in the membrane. This is an uncharacterized protein from Bos taurus (Bovine).